The sequence spans 436 residues: MASREGKRRNHNHDDEKLVPLAALISRETKAAKMEKPIVRFGQAAQSRKGEDYVLIKTDSLRVPSNSSTAFSVFAVFDGHNGKAAAVYTRENLLNHVISALPSGLSRDEWLHALPRALVSGFVKTDKEFQSRGETSGTTATFVIVDGWTVTVACVGDSRCILDTKGGSVSNLTVDHRLEDNTEERERVTASGGEVGRLSIVGGVEIGPLRCWPGGLCLSRSIGDMDVGEFIVPVPFVKQVKLSNLGGRLIIASDGIWDALSSEVAAKTCRGLSAELAARQVVKEALRRRGLKDDTTCIVVDIIPPENFQEPPPSPPKKHNNFFKSLLFRKKSNSSNKLSKKLSTVGIVEELFEEGSAMLAERLGSGDCSKESTTGGGIFTCAICQLDLAPSEGISVHAGSIFSTSLKPWQGPFLCTDCRDKKDAMEGKRPSGVKVI.

Residues 30–302 form the PPM-type phosphatase domain; that stretch reads KAAKMEKPIV…DDTTCIVVDI (273 aa). Mn(2+) is bound by residues Asp78, Gly79, Asp254, and Asp293.

Belongs to the PP2C family. It depends on Mg(2+) as a cofactor. The cofactor is Mn(2+).

The enzyme catalyses O-phospho-L-seryl-[protein] + H2O = L-seryl-[protein] + phosphate. It carries out the reaction O-phospho-L-threonyl-[protein] + H2O = L-threonyl-[protein] + phosphate. The chain is Probable protein phosphatase 2C 15 from Arabidopsis thaliana (Mouse-ear cress).